The sequence spans 235 residues: 2-C-methyl-D-erythritol 4-phosphate cytidylyltransferase (235 aa).

This sequence belongs to the IspD/TarI cytidylyltransferase family. IspD subfamily.

It carries out the reaction 2-C-methyl-D-erythritol 4-phosphate + CTP + H(+) = 4-CDP-2-C-methyl-D-erythritol + diphosphate. The protein operates within isoprenoid biosynthesis; isopentenyl diphosphate biosynthesis via DXP pathway; isopentenyl diphosphate from 1-deoxy-D-xylulose 5-phosphate: step 2/6. Functionally, catalyzes the formation of 4-diphosphocytidyl-2-C-methyl-D-erythritol from CTP and 2-C-methyl-D-erythritol 4-phosphate (MEP). In Leptospira borgpetersenii serovar Hardjo-bovis (strain L550), this protein is 2-C-methyl-D-erythritol 4-phosphate cytidylyltransferase.